We begin with the raw amino-acid sequence, 248 residues long: Ribosomal RNA small subunit methyltransferase J (248 aa).

S-adenosyl-L-methionine contacts are provided by residues 98 to 99 (RD), 114 to 115 (ER), 150 to 151 (SS), and Asp-168.

This sequence belongs to the methyltransferase superfamily. RsmJ family.

It localises to the cytoplasm. It catalyses the reaction guanosine(1516) in 16S rRNA + S-adenosyl-L-methionine = N(2)-methylguanosine(1516) in 16S rRNA + S-adenosyl-L-homocysteine + H(+). In terms of biological role, specifically methylates the guanosine in position 1516 of 16S rRNA. The protein is Ribosomal RNA small subunit methyltransferase J of Shewanella amazonensis (strain ATCC BAA-1098 / SB2B).